We begin with the raw amino-acid sequence, 338 residues long: Ferrochelatase (338 aa).

2 residues coordinate Fe cation: histidine 189 and glutamate 293.

It belongs to the ferrochelatase family.

The protein localises to the cytoplasm. It catalyses the reaction heme b + 2 H(+) = protoporphyrin IX + Fe(2+). Its pathway is porphyrin-containing compound metabolism; protoheme biosynthesis; protoheme from protoporphyrin-IX: step 1/1. Its function is as follows. Catalyzes the ferrous insertion into protoporphyrin IX. This chain is Ferrochelatase, found in Azotobacter vinelandii (strain DJ / ATCC BAA-1303).